Reading from the N-terminus, the 401-residue chain is MTSYNRSVAWLTVCVLLALHIGGSHQQQQQCTTPTRLRGRCISIYECDSILDYFKQRILTWEEREFLRKSQCTGATSGRQPFVCCPGNGSKPVVAPATTVPAGTASTTPAGPAATAPSGDAALADQLVGGLLPNPKKNECGVSIGMRIYGGQNADIDEFPWLALLQYENRKGERKYSCGGSLINRRYVLTAAHCVIGEVERKEGKLVSVRLGEYNTKTEIDCVTEEQEEICADPPIDAGIESVIVHPGYQDMAHADDIALLRLAQSIEYTSFVQPVCLPLTDFRASKTGEVNFVTGFGRTLQESRSAVKQKLGIKVYDHARCQEKYATKNSSITTNQLCAGGEYAKDSCHGDSGGPLMKLQKVWYLEGIVSYGNRCGLEDWPGVYTHVPAYMAWVRSNIKE.

Residues 1 to 26 (MTSYNRSVAWLTVCVLLALHIGGSHQ) form the signal peptide. Residues 30–85 (QCTTPTRLRGRCISIYECDSILDYFKQRILTWEEREFLRKSQCTGATSGRQPFVCC) enclose the Clip domain. Cystine bridges form between Cys-31-Cys-84, Cys-41-Cys-72, and Cys-47-Cys-85. N-linked (GlcNAc...) asparagine glycosylation is present at Asn-88. One can recognise a Peptidase S1 domain in the interval 148 to 400 (IYGGQNADID…YMAWVRSNIK (253 aa)). Cysteines 178 and 194 form a disulfide. Residues His-193 and Asp-257 each act as charge relay system in the active site. Intrachain disulfides connect Cys-322-Cys-339 and Cys-349-Cys-376. An N-linked (GlcNAc...) asparagine glycan is attached at Asn-330. Ser-353 acts as the Charge relay system in catalysis.

The protein belongs to the peptidase S1 family. CLIP subfamily. In terms of assembly, forms a covalent heterodimer with SRPN2; the interaction inhibits CLIPB9 protease activity. Proteolytic cleavage is necessary for activation.

The protein localises to the secreted. With respect to regulation, inhibited by serpin SRPN2. Functionally, serine protease that functions in the melanization-mediated immune response. Cleaves and activates prophenoloxidase (PPO), which is required for the activation of the prophenoloxidase cascade probably following the recognition of pathogen-derived products. The chain is CLIP domain-containing serine protease B9 from Anopheles gambiae (African malaria mosquito).